The primary structure comprises 212 residues: Methylthioribulose-1-phosphate dehydratase (212 aa).

Positions 97 and 99 each coordinate Zn(2+).

The protein belongs to the aldolase class II family. MtnB subfamily. In terms of assembly, homotetramer. Requires Zn(2+) as cofactor.

It carries out the reaction 5-(methylsulfanyl)-D-ribulose 1-phosphate = 5-methylsulfanyl-2,3-dioxopentyl phosphate + H2O. It participates in amino-acid biosynthesis; L-methionine biosynthesis via salvage pathway; L-methionine from S-methyl-5-thio-alpha-D-ribose 1-phosphate: step 2/6. In terms of biological role, catalyzes the dehydration of methylthioribulose-1-phosphate (MTRu-1-P) into 2,3-diketo-5-methylthiopentyl-1-phosphate (DK-MTP-1-P). The sequence is that of Methylthioribulose-1-phosphate dehydratase from Bacillus thuringiensis subsp. konkukian (strain 97-27).